Consider the following 526-residue polypeptide: Probable fucosyltransferase 7 (526 aa).

Residues 1 to 4 (MKTK) are Cytoplasmic-facing. A helical; Signal-anchor for type II membrane protein transmembrane segment spans residues 5 to 25 (LMITIFSCLLLWSMLLLLSFS). Topologically, residues 26 to 526 (NIFKHQLLGA…KLVDDTKNEL (501 aa)) are lumenal. N-linked (GlcNAc...) asparagine glycosylation is found at N211, N215, and N363.

Belongs to the glycosyltransferase 37 family. In terms of tissue distribution, expressed in roots, leaves, stems and seedlings.

The protein localises to the golgi apparatus. It localises to the golgi stack membrane. Its pathway is protein modification; protein glycosylation. In terms of biological role, may be involved in cell wall biosynthesis. May act as a fucosyltransferase. In Arabidopsis thaliana (Mouse-ear cress), this protein is Probable fucosyltransferase 7 (FUT7).